Consider the following 137-residue polypeptide: Structural protein A137R (137 aa).

Belongs to the asfivirus A137R family. In terms of assembly, interacts with host TBK1.

The protein localises to the virion. Its subcellular location is the host cytoplasm. In terms of biological role, plays a role in the inhibition of the host innate immune response. Mechanistically, promotes the autophagy-mediated lysosomal degradation of host TBK1 and affects IRF3 nuclear translocation to block type I IFN production. This is Structural protein A137R from Ornithodoros (relapsing fever ticks).